The sequence spans 120 residues: Protein VraC (120 aa).

This chain is Protein VraC, found in Staphylococcus epidermidis (strain ATCC 35984 / DSM 28319 / BCRC 17069 / CCUG 31568 / BM 3577 / RP62A).